The primary structure comprises 659 residues: MSAYTSLNFLFLLTFFIGSLRVSAQLQDPTYVGHVCTNRISRNSIYFSNLQTLLTSLSSNNAYFSLGSHSLTKGQNSDMVFGLYLCKGDLSPESCRECVIFAAKDTRSRCPGGKEFLIQYDECMLGYSDRNIFMDTVTTTTIITWNTQKVTADQSDRFNDAVLSLMKKSAEEAANSTSKKFAVKKSDFSSSQSLYASVQCIPDLTSEDCVMCLQQSIKELYFNKVGGRFLVPSCNSRYEVYPFYKETIEGTVLPPPVSAPPLPLVSTPSFPPGKGKNSTVIIIAIVVPVAISVLICVAVFSFHASKRAKKTYDTPEEDDITTAGSLQFDFKVIEAATDKFSMCNKLGQGGFGQVYKGTLPNGVQVAVKRLSKTSGQGEKEFKNEVVVVAKLQHRNLVKLLGFCLEREEKILVYEFVSNKSLDYFLFDSRMQSQLDWTTRYKIIGGIARGILYLHQDSRLTIIHRDLKAGNILLDADMNPKVADFGMARIFEIDQTEAHTRRVVGTYGYMSPEYAMYGQFSMKSDVYSFGVLVLEIISGRKNSSLYQMDASFGNLVTYTWRLWSDGSPLDLVDSSFRDSYQRNEIIRCIHIALLCVQEDTENRPTMSAIVQMLTTSSIALAVPQPPGFFFRSNHEQAGPSMDKSSLCSIDAASITILAPR.

Residues 1-24 (MSAYTSLNFLFLLTFFIGSLRVSA) form the signal peptide. Residues 25–279 (QLQDPTYVGH…FPPGKGKNST (255 aa)) lie on the Extracellular side of the membrane. Gnk2-homologous domains lie at 28–132 (DPTY…DRNI) and 138–243 (TTTT…VYPF). Residues Asn-175 and Asn-277 are each glycosylated (N-linked (GlcNAc...) asparagine). A helical transmembrane segment spans residues 280–300 (VIIIAIVVPVAISVLICVAVF). At 301 to 659 (SFHASKRAKK…AASITILAPR (359 aa)) the chain is on the cytoplasmic side. Residues 340 to 619 (FSMCNKLGQG…QMLTTSSIAL (280 aa)) enclose the Protein kinase domain. Residues 346–354 (LGQGGFGQV) and Lys-368 contribute to the ATP site. Tyr-413 bears the Phosphotyrosine mark. Asp-465 acts as the Proton acceptor in catalysis. At Thr-505 the chain carries Phosphothreonine. A Phosphotyrosine modification is found at Tyr-513.

The protein belongs to the protein kinase superfamily. Ser/Thr protein kinase family. CRK subfamily. As to quaternary structure, interacts with CRKIP1 (KAPP), CRKIP2 and CRKIP3, three kinase-associated type 2C proteins.

It is found in the membrane. It catalyses the reaction L-seryl-[protein] + ATP = O-phospho-L-seryl-[protein] + ADP + H(+). The enzyme catalyses L-threonyl-[protein] + ATP = O-phospho-L-threonyl-[protein] + ADP + H(+). Its function is as follows. Involved in multiple distinct defense responses. May function as a disease resistance (R) protein. This Arabidopsis thaliana (Mouse-ear cress) protein is Cysteine-rich receptor-like protein kinase 5 (CRK5).